The chain runs to 198 residues: Na(+)-translocating NADH-quinone reductase subunit E (198 aa).

6 helical membrane passes run 11–31 (SIFI…FLAV), 39–59 (FGLG…NNLV), 77–97 (FLNF…LEMV), 110–130 (GIFL…SFMV), 140–160 (IVYG…LAGI), and 176–196 (LGIT…FSGV).

Belongs to the NqrDE/RnfAE family. As to quaternary structure, composed of six subunits; NqrA, NqrB, NqrC, NqrD, NqrE and NqrF.

The protein resides in the cell inner membrane. It catalyses the reaction a ubiquinone + n Na(+)(in) + NADH + H(+) = a ubiquinol + n Na(+)(out) + NAD(+). In terms of biological role, NQR complex catalyzes the reduction of ubiquinone-1 to ubiquinol by two successive reactions, coupled with the transport of Na(+) ions from the cytoplasm to the periplasm. NqrA to NqrE are probably involved in the second step, the conversion of ubisemiquinone to ubiquinol. This chain is Na(+)-translocating NADH-quinone reductase subunit E, found in Vibrio campbellii (strain ATCC BAA-1116).